A 513-amino-acid polypeptide reads, in one-letter code: ATP synthase subunit alpha (513 aa).

169-176 (GDRQTGKT) contributes to the ATP binding site.

The protein belongs to the ATPase alpha/beta chains family. In terms of assembly, F-type ATPases have 2 components, CF(1) - the catalytic core - and CF(0) - the membrane proton channel. CF(1) has five subunits: alpha(3), beta(3), gamma(1), delta(1), epsilon(1). CF(0) has three main subunits: a(1), b(2) and c(9-12). The alpha and beta chains form an alternating ring which encloses part of the gamma chain. CF(1) is attached to CF(0) by a central stalk formed by the gamma and epsilon chains, while a peripheral stalk is formed by the delta and b chains.

It is found in the cell inner membrane. It catalyses the reaction ATP + H2O + 4 H(+)(in) = ADP + phosphate + 5 H(+)(out). Its function is as follows. Produces ATP from ADP in the presence of a proton gradient across the membrane. The alpha chain is a regulatory subunit. This chain is ATP synthase subunit alpha, found in Shewanella sp. (strain MR-4).